We begin with the raw amino-acid sequence, 396 residues long: Elongation factor Tu (396 aa).

One can recognise a tr-type G domain in the interval lysine 10–glutamine 206. The segment at glycine 19 to threonine 26 is G1. Glycine 19–threonine 26 contributes to the GTP binding site. Threonine 26 contributes to the Mg(2+) binding site. The tract at residues glycine 60 to serine 64 is G2. Residues aspartate 81–glycine 84 form a G3 region. GTP contacts are provided by residues aspartate 81–histidine 85 and asparagine 136–aspartate 139. A G4 region spans residues asparagine 136–aspartate 139. The G5 stretch occupies residues serine 174 to leucine 176.

The protein belongs to the TRAFAC class translation factor GTPase superfamily. Classic translation factor GTPase family. EF-Tu/EF-1A subfamily. Monomer.

Its subcellular location is the cytoplasm. It catalyses the reaction GTP + H2O = GDP + phosphate + H(+). In terms of biological role, GTP hydrolase that promotes the GTP-dependent binding of aminoacyl-tRNA to the A-site of ribosomes during protein biosynthesis. In Stigmatella aurantiaca, this protein is Elongation factor Tu.